A 270-amino-acid chain; its full sequence is Acyl-[acyl-carrier-protein]--UDP-N-acetylglucosamine O-acyltransferase (270 aa).

Belongs to the transferase hexapeptide repeat family. LpxA subfamily. As to quaternary structure, homotrimer.

It localises to the cytoplasm. The catalysed reaction is a (3R)-hydroxyacyl-[ACP] + UDP-N-acetyl-alpha-D-glucosamine = a UDP-3-O-[(3R)-3-hydroxyacyl]-N-acetyl-alpha-D-glucosamine + holo-[ACP]. It functions in the pathway glycolipid biosynthesis; lipid IV(A) biosynthesis; lipid IV(A) from (3R)-3-hydroxytetradecanoyl-[acyl-carrier-protein] and UDP-N-acetyl-alpha-D-glucosamine: step 1/6. Functionally, involved in the biosynthesis of lipid A, a phosphorylated glycolipid that anchors the lipopolysaccharide to the outer membrane of the cell. The sequence is that of Acyl-[acyl-carrier-protein]--UDP-N-acetylglucosamine O-acyltransferase from Helicobacter pylori (strain HPAG1).